A 298-amino-acid polypeptide reads, in one-letter code: HTH-type transcriptional regulator TsaR (298 aa).

The HTH lysR-type domain occupies 1-58 (MKLQTLQALICIEEVGSLRAAAQLLHLSQPALSAAIQQLEDELKAPLLVRTKRGVSLT). The segment at residues 18–37 (LRAAAQLLHLSQPALSAAIQ) is a DNA-binding region (H-T-H motif). The toluene-4-sulfonate site is built by Ser98 and Ala100.

This sequence belongs to the LysR transcriptional regulatory family. In terms of assembly, homotetramer. Dimer of dimers related by a twofold axis.

With respect to regulation, sensitive to oxygen. In terms of biological role, regulates expression of the tsaMBCD1 operon and of tsaT in response to p-toluenesulfonate (TSA). Acts by binding directly to the promoter region. Binding to the tsa promoter depends on TSA concentration. This chain is HTH-type transcriptional regulator TsaR (tsaR), found in Comamonas testosteroni (Pseudomonas testosteroni).